The sequence spans 105 residues: Large ribosomal subunit protein eL42z/eL42y (105 aa).

Positions 28–57 are disordered; sequence YKKGKDSLAAQGKRRYDRKQSGYGGQTKPV.

This sequence belongs to the eukaryotic ribosomal protein eL42 family.

In Arabidopsis thaliana (Mouse-ear cress), this protein is Large ribosomal subunit protein eL42z/eL42y (RPL36AA).